The sequence spans 750 residues: Photosystem I P700 chlorophyll a apoprotein A1 (750 aa).

8 helical membrane passes run 70–93, 156–179, 195–219, 291–309, 346–369, 385–411, 433–455, and 531–549; these read VFSAHFGQLSIIFLWLSGMYFHGA, LYCTAIGALVFAALMLFAGWFHYH, LNHHLAGLLGLGSLSWAGHQVHVSL, IAHHHLAIAILFLIAGHMY, WHAQLSLNLAMLGSLTIVVAHHMY, LSLFTHHMWIGGFLIVGAAAHAAIFMV, AIISHLNWVCIFLGFHSFGLYIH, and FLVHHIHAFTIHVTVLILL. [4Fe-4S] cluster is bound by residues C573 and C582. Transmembrane regions (helical) follow at residues 589-610 and 664-686; these read HVFLGLFWMYNAISVVIFHFSW and LSAYGLFFLGAHFVWAFSLMFLF. H675 serves as a coordination point for chlorophyll a'. Positions 683 and 691 each coordinate chlorophyll a. W692 contacts phylloquinone. A helical membrane pass occupies residues 724–744; the sequence is AVGVTHYLLGGIATTWAFFLA.

It belongs to the PsaA/PsaB family. In terms of assembly, the PsaA/B heterodimer binds the P700 chlorophyll special pair and subsequent electron acceptors. PSI consists of a core antenna complex that captures photons, and an electron transfer chain that converts photonic excitation into a charge separation. The eukaryotic PSI reaction center is composed of at least 11 subunits. Requires P700 is a chlorophyll a/chlorophyll a' dimer, A0 is one or more chlorophyll a, A1 is one or both phylloquinones and FX is a shared 4Fe-4S iron-sulfur center. as cofactor.

It is found in the plastid. It localises to the chloroplast thylakoid membrane. The enzyme catalyses reduced [plastocyanin] + hnu + oxidized [2Fe-2S]-[ferredoxin] = oxidized [plastocyanin] + reduced [2Fe-2S]-[ferredoxin]. PsaA and PsaB bind P700, the primary electron donor of photosystem I (PSI), as well as the electron acceptors A0, A1 and FX. PSI is a plastocyanin-ferredoxin oxidoreductase, converting photonic excitation into a charge separation, which transfers an electron from the donor P700 chlorophyll pair to the spectroscopically characterized acceptors A0, A1, FX, FA and FB in turn. Oxidized P700 is reduced on the lumenal side of the thylakoid membrane by plastocyanin. This chain is Photosystem I P700 chlorophyll a apoprotein A1, found in Draba nemorosa (Woodland whitlowgrass).